A 408-amino-acid chain; its full sequence is Histidine--tRNA ligase (408 aa).

The protein belongs to the class-II aminoacyl-tRNA synthetase family. In terms of assembly, homodimer.

The protein localises to the cytoplasm. The enzyme catalyses tRNA(His) + L-histidine + ATP = L-histidyl-tRNA(His) + AMP + diphosphate + H(+). This Wolbachia pipientis wMel protein is Histidine--tRNA ligase.